The sequence spans 791 residues: Leucine-rich repeat-containing protein SOG2 (791 aa).

The disordered stretch occupies residues 1–28; sequence MVATSSKRTLDPKEEHLPADKTSTNSSN. Residues 8–19 show a composition bias toward basic and acidic residues; the sequence is RTLDPKEEHLPA. LRR repeat units follow at residues 43 to 64, 67 to 88, 90 to 111, 113 to 134, 138 to 159, and 163 to 183; these read SGTT…DVGY, NVER…FKRL, RLQY…LTQC, QLEI…ISSF, NIRV…KSIT, and KLSI…DQVQ. A Phosphothreonine modification is found at Thr-214. Disordered stretches follow at residues 454-506 and 534-569; these read ASKA…TPSA and HTHG…PRQQ. Residues 469 to 486 show a composition bias toward low complexity; it reads SSSSITSGGGPAASTTST. A compositionally biased stretch (polar residues) spans 544-569; it reads NAISNGSSQTNMNEVKTTSDTIPRQQ.

It is found in the cytoplasm. In terms of biological role, required for proper cell morphogenesis and cell separation after mitosis. Functions in the RAM (regulation of ACE2 activity and cellular morphogenesis) signaling network and is required for proper ACE2 localization and CBK1 kinase activity. This is Leucine-rich repeat-containing protein SOG2 from Saccharomyces cerevisiae (strain ATCC 204508 / S288c) (Baker's yeast).